We begin with the raw amino-acid sequence, 276 residues long: Cytoplasmic envelopment protein 1 (276 aa).

This sequence belongs to the herpesviridae cytoplasmic envelopment protein 1 family.

The protein resides in the virion. Its subcellular location is the virion tegument. The protein localises to the host cytoplasm. It is found in the host Golgi apparatus. Its function is as follows. Plays a critical role in cytoplasmic virus egress. Participates in the final step of tegumentation and envelope acquisition within the host cytoplasm. In Equus caballus (Horse), this protein is Cytoplasmic envelopment protein 1 (42).